Here is a 206-residue protein sequence, read N- to C-terminus: Ribosomal RNA large subunit methyltransferase E (206 aa).

The S-adenosyl-L-methionine site is built by G60, W62, D80, D96, and D121. K161 serves as the catalytic Proton acceptor.

It belongs to the class I-like SAM-binding methyltransferase superfamily. RNA methyltransferase RlmE family.

It localises to the cytoplasm. The catalysed reaction is uridine(2552) in 23S rRNA + S-adenosyl-L-methionine = 2'-O-methyluridine(2552) in 23S rRNA + S-adenosyl-L-homocysteine + H(+). Specifically methylates the uridine in position 2552 of 23S rRNA at the 2'-O position of the ribose in the fully assembled 50S ribosomal subunit. The polypeptide is Ribosomal RNA large subunit methyltransferase E (Legionella pneumophila (strain Corby)).